The chain runs to 359 residues: Type-1 angiotensin II receptor (359 aa).

The Extracellular segment spans residues 1–25 (MILNSSTEDGIKRIQDDCPKAGRHS). A glycan (N-linked (GlcNAc...) asparagine) is linked at Asn4. 2 residues coordinate angiotensin II: Gln15 and Asp17. Intrachain disulfides connect Cys18/Cys274 and Cys101/Cys180. A helical membrane pass occupies residues 26 to 55 (YIFVMIPTLYSIIFVVGIFGNSLVVIVIYF). Residues 56–61 (YMKLKT) are Cytoplasmic-facing. Residues 62 to 89 (VASVFLLNLALADICFLLTLPLWAVYTA) form a helical membrane-spanning segment. Residues 90 to 98 (MEYRWPFGN) lie on the Extracellular side of the membrane. A helical transmembrane segment spans residues 99–125 (YLCKIASASVSFNLYASVFLLTCLSID). Residues 126-141 (RYLAIVHPMKSRLRRT) lie on the Cytoplasmic side of the membrane. The chain crosses the membrane as a helical span at residues 142-165 (MLVAKVTCVIIWLMAGLASLPAVI). The Extracellular segment spans residues 166-190 (HRNVFFIENTNITVCAFHYESQNST). Arg167 serves as a coordination point for angiotensin II. Residue Asn176 is glycosylated (N-linked (GlcNAc...) asparagine). The angiotensin II site is built by Phe182, His183, and Tyr184. Asn188 carries an N-linked (GlcNAc...) asparagine glycan. A helical membrane pass occupies residues 191 to 216 (LPIGLGLTKNILGFMFPFLIILTSYT). Position 199 (Lys199) interacts with angiotensin II. Topologically, residues 217–239 (LIWKALKKAYEIQKNKPRNDDIF) are cytoplasmic. A helical transmembrane segment spans residues 240–268 (KIIMAIVLFFFFSWVPHQIFTFLDVLIQL). Residues 269-278 (GIIHDCKISD) are Extracellular-facing. The helical transmembrane segment at 279-304 (IVDTAMPITICIAYFNNCLNPLFYGF) threads the bilayer. The Cytoplasmic portion of the chain corresponds to 305–359 (LGKKFKKYFLQLLKYIPPKAKSHSTLSTKMSTLSYRPSDNVSSSAKKPVQCFEVE). The segment covering 337–349 (LSYRPSDNVSSSA) has biased composition (polar residues). Residues 337-359 (LSYRPSDNVSSSAKKPVQCFEVE) are disordered. Cys355 is lipidated: S-palmitoyl cysteine.

This sequence belongs to the G-protein coupled receptor 1 family. Interacts with MAS1. Interacts with ARRB1. Interacts with FLNA (via filamin repeat 21); increases PKA-mediated phosphorylation of FLNA. In terms of processing, C-terminal Ser or Thr residues may be phosphorylated. Expressed in liver, kidney, adrenal gland, heart and colon.

It localises to the cell membrane. In terms of biological role, receptor for angiotensin II, a vasoconstricting peptide, which acts as a key regulator of blood pressure and sodium retention by the kidney. The activated receptor in turn couples to G-alpha proteins G(q) (GNAQ, GNA11, GNA14 or GNA15) and thus activates phospholipase C and increases the cytosolic Ca(2+) concentrations, which in turn triggers cellular responses such as stimulation of protein kinase C. The polypeptide is Type-1 angiotensin II receptor (AGTR1) (Cavia porcellus (Guinea pig)).